Reading from the N-terminus, the 566-residue chain is Glucose starvation modulator protein 1 (566 aa).

The zn(2)-C6 fungal-type DNA-binding region spans 20-48 (CVFCHQKHLQCSNERPCKNCVKRNIAHGC). Disordered stretches follow at residues 65-93 (PGAVSNKQSTPRKKLKTGPVSTSVSPMDS) and 250-270 (KQASPSPSNTSTSENNTNTLS). A compositionally biased stretch (polar residues) spans 83–93 (PVSTSVSPMDS). Over residues 253 to 270 (SPSPSNTSTSENNTNTLS) the composition is skewed to low complexity.

The protein belongs to the ERT1/acuK family.

The protein resides in the nucleus. In terms of biological role, transcription factor which regulates nonfermentable carbon utilization. In Candida albicans (strain SC5314 / ATCC MYA-2876) (Yeast), this protein is Glucose starvation modulator protein 1 (ZCF23).